A 507-amino-acid polypeptide reads, in one-letter code: ATP synthase subunit alpha, chloroplastic (507 aa).

An ATP-binding site is contributed by 170-177; that stretch reads GDRQTGKT.

The protein belongs to the ATPase alpha/beta chains family. As to quaternary structure, F-type ATPases have 2 components, CF(1) - the catalytic core - and CF(0) - the membrane proton channel. CF(1) has five subunits: alpha(3), beta(3), gamma(1), delta(1), epsilon(1). CF(0) has four main subunits: a, b, b' and c.

The protein localises to the plastid. Its subcellular location is the chloroplast thylakoid membrane. The enzyme catalyses ATP + H2O + 4 H(+)(in) = ADP + phosphate + 5 H(+)(out). In terms of biological role, produces ATP from ADP in the presence of a proton gradient across the membrane. The alpha chain is a regulatory subunit. This Huperzia lucidula (Shining clubmoss) protein is ATP synthase subunit alpha, chloroplastic.